The sequence spans 684 residues: Cleavage and polyadenylation specificity factor 73 (684 aa).

Positions 77, 79, 81, 82, 164, and 185 each coordinate Zn(2+). H402 serves as the catalytic Proton donor. H424 contacts Zn(2+).

It belongs to the metallo-beta-lactamase superfamily. RNA-metabolizing metallo-beta-lactamase-like family. CPSF3 subfamily. Component of the cleavage and polyadenylation specificity factor (CPSF) complex, composed of at least Clp, Cpsf73, Cpsf100 and Cpsf160. Interacts with Sym and Cpsf100 forming a core cleavage factor required for both polyadenylated and histone mRNA processing. Interacts with Slbp and Lsm11. The cofactor is Zn(2+).

It localises to the nucleus. In terms of biological role, component of the cleavage and polyadenylation specificity factor (CPSF) complex that plays a key role in pre-mRNA 3'-end formation, recognizing the AAUAAA signal sequence and interacting with poly(A) polymerase and other factors to bring about cleavage and poly(A) addition. Has endonuclease activity and functions as an mRNA 3'-end-processing endonuclease. Required for the cotranscriptional processing of 3'-ends of polyadenylated and histone pre-mRNA. This Drosophila melanogaster (Fruit fly) protein is Cleavage and polyadenylation specificity factor 73 (Cpsf73).